Reading from the N-terminus, the 253-residue chain is uncharacterized protein (253 aa).

Residues 211-241 (TTRRKRYREDRDSGEDLGAESKRGNGSVRYT) are disordered.

This is an uncharacterized protein from Ictalurid herpesvirus 1 (strain Auburn) (IcHV-1).